The chain runs to 564 residues: ATP-dependent RNA helicase ROK1 (564 aa).

2 disordered regions span residues 1–25 and 62–87; these read MDIFRVLTRGASVKKESGPKAKAAD and EDDREKTTENDSPNKEEKSGNDDGLI. Composition is skewed to basic and acidic residues over residues 13 to 23 and 62 to 86; these read VKKESGPKAKA and EDDREKTTENDSPNKEEKSGNDDGL. The Q motif motif lies at 122 to 150; that stretch reads DLISRFSFDRRLLNNLIENGFTEPTPIQC. Positions 153 to 333 constitute a Helicase ATP-binding domain; sequence IPVALNNRDV…QSIMMDPVRV (181 aa). 166–173 lines the ATP pocket; that stretch reads GPTGSGKT. Positions 280–283 match the DEAD box motif; the sequence is DEAD. The 163-residue stretch at 344 to 506 folds into the Helicase C-terminal domain; sequence NIEQKLIFCG…EVSEWMDKMA (163 aa). Residues 512–564 are disordered; sequence EKESIKNGKAHKERKQITTVPKMDKAKRRRQQEMIAASKRRKNEELSKKHFSK. The span at 553-564 shows a compositional bias: basic and acidic residues; that stretch reads KNEELSKKHFSK.

It belongs to the DEAD box helicase family. DDX52/ROK1 subfamily. Interacts with the U3 snoRNA and is associated with the 90S and 40S pre-ribosomes. This association requires the presence of RRP5. Also interacts with OSH3.

The protein resides in the nucleus. It is found in the nucleolus. It catalyses the reaction ATP + H2O = ADP + phosphate + H(+). Functionally, ATP-dependent RNA helicase involved in 40S ribosomal subunit biogenesis. Required for the processing and cleavage of 35S pre-rRNA at sites A0, A1, and A2, leading to mature 18S rRNA. This is ATP-dependent RNA helicase ROK1 (ROK1) from Saccharomyces cerevisiae (strain YJM789) (Baker's yeast).